The chain runs to 368 residues: N-acetylneuraminate epimerase 2 (368 aa).

A signal peptide spans 1–19; the sequence is MNKTITALAILMASFAANA. 7 Kelch repeats span residues 40–84, 86–137, 139–173, 174–219, 222–265, 287–336, and 338–367; these read TVYI…AFID, NLYV…FVHN, KAYV…KINA, YYFD…VNKG, TWLI…VAGG, ENYQ…LWNN, and LLII…VTVQ. The Proton acceptor role is filled by glutamate 228.

Belongs to the NanM family. Homodimer.

Its subcellular location is the periplasm. It carries out the reaction N-acetyl-alpha-neuraminate = N-acetyl-beta-neuraminate. In terms of biological role, converts alpha-N-acetylneuranimic acid (Neu5Ac) to the beta-anomer, accelerating the equilibrium between the alpha- and beta-anomers. Probably facilitates sialidase-negative bacteria to compete successfully for limited amounts of extracellular Neu5Ac, which is likely taken up in the beta-anomer. In addition, the rapid removal of sialic acid from solution might be advantageous to the bacterium to damp down host responses. The protein is N-acetylneuraminate epimerase 2 of Escherichia coli O6:H1 (strain CFT073 / ATCC 700928 / UPEC).